Consider the following 541-residue polypeptide: MSLNVLFVASEAVPLAKTGGLGDMVGACAGALQRAGLHVTVMLPGYPAAQAQLRDARVACALPDLPGGPARVLLGAMPDTGVPVLLLDAPALFDRPGNPYLDACGEPYADNALRFAAFSHAAAHVAGGVPDLPAFDIVQAHDWHAALVPLLVKRAGRPVKTVLTVHNLAFQGNFPPRIAQDLGLPPEAVREAGFFGQFSFLKAGLMWADRITTVSRTYAREILTDAFGYGMQDVLRARRHDLVAILNGIDNAVWNPSKDAYLSRPFFAGNLSGKHAAKLQLQTLLRLPKDAHAPLLALGSRLTHQKMADVALQALPQMLEAHPDLQVAVLGCGERRYESAMAALAERHPRRMAAVIGYTERNAHMLHAGADLLLHGSRFEPCGLTPLYAMRYGTVPVASRVGGLVDTIADRGSPEAALRGATGFLFDGETPEAMAGAVARALRVFVQPRAWRVLQYNGMTTDFGWSQPASEYLALYATLAPRATPMPHLQHWPMRTLARPASPPDTAPVGKPARRRRTTALSTTARAHPVARAAGREKIRA.

An ADP-alpha-D-glucose-binding site is contributed by Lys-17. The segment at 497–541 is disordered; sequence LARPASPPDTAPVGKPARRRRTTALSTTARAHPVARAAGREKIRA.

This sequence belongs to the glycosyltransferase 1 family. Bacterial/plant glycogen synthase subfamily.

It carries out the reaction [(1-&gt;4)-alpha-D-glucosyl](n) + ADP-alpha-D-glucose = [(1-&gt;4)-alpha-D-glucosyl](n+1) + ADP + H(+). Its pathway is glycan biosynthesis; glycogen biosynthesis. Functionally, synthesizes alpha-1,4-glucan chains using ADP-glucose. In Ralstonia nicotianae (strain ATCC BAA-1114 / GMI1000) (Ralstonia solanacearum), this protein is Glycogen synthase.